Reading from the N-terminus, the 343-residue chain is Protease HtpX homolog (343 aa).

The next 2 membrane-spanning stretches (helical) occupy residues 7–24 (TMLL…GYLV) and 29–46 (GMVV…FSYW). His130 is a Zn(2+) binding site. Residue Glu131 is part of the active site. His134 is a binding site for Zn(2+). Transmembrane regions (helical) follow at residues 145–165 (LTAT…LMGM) and 177–197 (GAGM…AMLV). Glu206 contributes to the Zn(2+) binding site. The disordered stretch occupies residues 308–343 (NLEDEDLNPEAQNGFTHNQKKKTVRRGKDRPTWLRH). The segment covering 325-335 (NQKKKTVRRGK) has biased composition (basic residues).

This sequence belongs to the peptidase M48B family. It depends on Zn(2+) as a cofactor.

It localises to the cell inner membrane. The sequence is that of Protease HtpX homolog from Bartonella bacilliformis (strain ATCC 35685 / KC583 / Herrer 020/F12,63).